An 837-amino-acid polypeptide reads, in one-letter code: Tuftelin-interacting protein 11 (837 aa).

Positions 1-13 (MSLSHLYRDGEGH) are enriched in basic and acidic residues. Disordered regions lie at residues 1–31 (MSLS…DWDL), 54–73 (WAER…RARD), and 85–133 (LKKG…KGFA). The interval 1–50 (MSLSHLYRDGEGHMDDDDDERENFEITDWDLQNEFNPNRQRHWQTKEEAT) is required for interaction with DHX15. The residue at position 2 (serine 2) is a Phosphoserine. Positions 14–28 (MDDDDDERENFEITD) are enriched in acidic residues. The segment covering 54–64 (WAERDSDEERP) has biased composition (basic and acidic residues). Serine 59 and serine 98 each carry phosphoserine. Residues 91-102 (EEAELEDSEDEE) show a composition bias toward acidic residues. The span at 103–116 (KPVKQDDFPKDFGP) shows a compositional bias: basic and acidic residues. Serine 144 is subject to Phosphoserine. Residues 149-195 (TKGIGQKLLQKMGYVPGRGLGKNAQGIINPIEAKQRKGKGAVGAYGS) form the G-patch domain. 2 disordered regions span residues 183 to 236 (QRKG…KKKP) and 289 to 312 (HNVP…EAKA). A Phosphoserine modification is found at serine 210. Positions 217–231 (EFQKELSQWRKDPSG) are enriched in basic and acidic residues. The short motif at 700–705 (VKDKFN) is the Nuclear localization signal element. The tract at residues 710–734 (IMNRAVSSNVGAYMQPGARENIAYL) is required for nuclear speckle localization.

It belongs to the TFP11/STIP family. Identified in the spliceosome C complex. Found in the Intron Large (IL) complex, a post-mRNA release spliceosomal complex containing the excised intron, U2, U5 and U6 snRNPs, and splicing factors. Interacts with TUFT1. Interacts with DHX15; indicative for a recruitment of DHX15 to the IL complex. Interacts with GCFC2.

It is found in the cytoplasm. The protein resides in the nucleus. In terms of biological role, involved in pre-mRNA splicing, specifically in spliceosome disassembly during late-stage splicing events. Intron turnover seems to proceed through reactions in two lariat-intron associated complexes termed Intron Large (IL) and Intron Small (IS). In cooperation with DHX15 seems to mediate the transition of the U2, U5 and U6 snRNP-containing IL complex to the snRNP-free IS complex leading to efficient debranching and turnover of excised introns. May play a role in the differentiation of ameloblasts and odontoblasts or in the forming of the enamel extracellular matrix. The chain is Tuftelin-interacting protein 11 (TFIP11) from Canis lupus familiaris (Dog).